A 273-amino-acid polypeptide reads, in one-letter code: Ethanolamine ammonia-lyase small subunit (273 aa).

Adenosylcob(III)alamin contacts are provided by valine 164, glutamate 185, and cysteine 214.

The protein belongs to the EutC family. In terms of assembly, the basic unit is a heterodimer which dimerizes to form tetramers. The heterotetramers trimerize; 6 large subunits form a core ring with 6 small subunits projecting outwards. Adenosylcob(III)alamin is required as a cofactor.

The protein localises to the bacterial microcompartment. The enzyme catalyses ethanolamine = acetaldehyde + NH4(+). Its pathway is amine and polyamine degradation; ethanolamine degradation. Catalyzes the deamination of various vicinal amino-alcohols to oxo compounds. Allows this organism to utilize ethanolamine as the sole source of nitrogen and carbon in the presence of external vitamin B12. The polypeptide is Ethanolamine ammonia-lyase small subunit (Pseudomonas paraeruginosa (strain DSM 24068 / PA7) (Pseudomonas aeruginosa (strain PA7))).